A 341-amino-acid chain; its full sequence is Glycerol-3-phosphate dehydrogenase [NAD(P)+] (341 aa).

Ser-15, Trp-16, Arg-36, and Lys-110 together coordinate NADPH. Sn-glycerol 3-phosphate is bound by residues Lys-110, Gly-139, and Ser-141. Ala-143 contacts NADPH. Sn-glycerol 3-phosphate-binding residues include Lys-194, Asp-247, Ser-257, Arg-258, and Asn-259. The active-site Proton acceptor is Lys-194. Arg-258 contributes to the NADPH binding site. NADPH contacts are provided by Val-282 and Glu-284.

The protein belongs to the NAD-dependent glycerol-3-phosphate dehydrogenase family.

The protein resides in the cytoplasm. The catalysed reaction is sn-glycerol 3-phosphate + NAD(+) = dihydroxyacetone phosphate + NADH + H(+). It catalyses the reaction sn-glycerol 3-phosphate + NADP(+) = dihydroxyacetone phosphate + NADPH + H(+). It participates in membrane lipid metabolism; glycerophospholipid metabolism. Its function is as follows. Catalyzes the reduction of the glycolytic intermediate dihydroxyacetone phosphate (DHAP) to sn-glycerol 3-phosphate (G3P), the key precursor for phospholipid synthesis. The protein is Glycerol-3-phosphate dehydrogenase [NAD(P)+] of Stenotrophomonas maltophilia (strain K279a).